Here is a 252-residue protein sequence, read N- to C-terminus: Imidazole glycerol phosphate synthase subunit HisF (252 aa).

Catalysis depends on residues D11 and D130.

This sequence belongs to the HisA/HisF family. In terms of assembly, heterodimer of HisH and HisF.

The protein localises to the cytoplasm. The enzyme catalyses 5-[(5-phospho-1-deoxy-D-ribulos-1-ylimino)methylamino]-1-(5-phospho-beta-D-ribosyl)imidazole-4-carboxamide + L-glutamine = D-erythro-1-(imidazol-4-yl)glycerol 3-phosphate + 5-amino-1-(5-phospho-beta-D-ribosyl)imidazole-4-carboxamide + L-glutamate + H(+). Its pathway is amino-acid biosynthesis; L-histidine biosynthesis; L-histidine from 5-phospho-alpha-D-ribose 1-diphosphate: step 5/9. In terms of biological role, IGPS catalyzes the conversion of PRFAR and glutamine to IGP, AICAR and glutamate. The HisF subunit catalyzes the cyclization activity that produces IGP and AICAR from PRFAR using the ammonia provided by the HisH subunit. The sequence is that of Imidazole glycerol phosphate synthase subunit HisF from Polynucleobacter necessarius subsp. necessarius (strain STIR1).